The following is a 469-amino-acid chain: Trigger factor (469 aa).

One can recognise a PPIase FKBP-type domain in the interval 165–250; that stretch reads GDRVTIDYIG…VKAVCKSDEL (86 aa). Residues 444–460 show a composition bias toward basic and acidic residues; that stretch reads DLTEKKPLKKKTAEKVS. The interval 444-469 is disordered; that stretch reads DLTEKKPLKKKTAEKVSTKKKAPKKS.

It belongs to the FKBP-type PPIase family. Tig subfamily.

Its subcellular location is the cytoplasm. It catalyses the reaction [protein]-peptidylproline (omega=180) = [protein]-peptidylproline (omega=0). Involved in protein export. Acts as a chaperone by maintaining the newly synthesized protein in an open conformation. Functions as a peptidyl-prolyl cis-trans isomerase. In Bartonella henselae (strain ATCC 49882 / DSM 28221 / CCUG 30454 / Houston 1) (Rochalimaea henselae), this protein is Trigger factor.